The sequence spans 278 residues: HTH-type transcriptional activator RhaS (278 aa).

Residues 174-272 enclose the HTH araC/xylS-type domain; sequence NLLLAWLEDH…NWSPRDIRQG (99 aa). DNA-binding regions (H-T-H motif) lie at residues 191–212 and 239–262; these read DAVA…KQQT and VTDI…RREF.

Binds DNA as a dimer.

Its subcellular location is the cytoplasm. Functionally, activates expression of the rhaBAD and rhaT operons. This Escherichia coli O157:H7 protein is HTH-type transcriptional activator RhaS.